The following is a 107-amino-acid chain: Universal stress protein B homolog (107 aa).

A run of 2 helical transmembrane segments spans residues 6 to 23 (TILFALMVVTCVNWARYF) and 89 to 106 (LFILSSALLGVTLLSSFI).

This sequence belongs to the universal stress protein B family.

It localises to the cell inner membrane. The sequence is that of Universal stress protein B homolog from Vibrio atlanticus (strain LGP32) (Vibrio splendidus (strain Mel32)).